Here is an 80-residue protein sequence, read N- to C-terminus: UPF0154 protein SZO_03240 (80 aa).

Residues 4 to 24 (AIWILLIIVALTAGLFGGIFI) traverse the membrane as a helical segment.

It belongs to the UPF0154 family.

It localises to the cell membrane. The sequence is that of UPF0154 protein SZO_03240 from Streptococcus equi subsp. zooepidemicus (strain H70).